The primary structure comprises 204 residues: Thymidylate kinase (204 aa).

11–18 lines the ATP pocket; that stretch reads GLDKSGKT.

Belongs to the thymidylate kinase family.

The catalysed reaction is dTMP + ATP = dTDP + ADP. It participates in pyrimidine metabolism; dTTP biosynthesis. The sequence is that of Thymidylate kinase (TMK) from Vaccinia virus (strain Ankara) (VACV).